Consider the following 1059-residue polypeptide: Isoleucine--tRNA ligase (1059 aa).

The 'HIGH' region signature appears at 47-57 (PYTSGQMHLGT). The 'KMSKS' region signature appears at 606 to 610 (KMSKS). Lys609 contacts ATP.

This sequence belongs to the class-I aminoacyl-tRNA synthetase family. IleS type 2 subfamily. Monomer. The cofactor is Zn(2+).

It localises to the cytoplasm. It carries out the reaction tRNA(Ile) + L-isoleucine + ATP = L-isoleucyl-tRNA(Ile) + AMP + diphosphate. Catalyzes the attachment of isoleucine to tRNA(Ile). As IleRS can inadvertently accommodate and process structurally similar amino acids such as valine, to avoid such errors it has two additional distinct tRNA(Ile)-dependent editing activities. One activity is designated as 'pretransfer' editing and involves the hydrolysis of activated Val-AMP. The other activity is designated 'posttransfer' editing and involves deacylation of mischarged Val-tRNA(Ile). This is Isoleucine--tRNA ligase from Haloquadratum walsbyi (strain DSM 16790 / HBSQ001).